Here is a 319-residue protein sequence, read N- to C-terminus: ATP-dependent 6-phosphofructokinase (319 aa).

Gly-11 is an ATP binding site. Arg-21 to Arg-25 contacts ADP. ATP-binding positions include Arg-72–Ser-73 and Gly-102–Ser-105. Asp-103 serves as a coordination point for Mg(2+). A substrate-binding site is contributed by Thr-125–Asp-127. Asp-127 functions as the Proton acceptor in the catalytic mechanism. Arg-154 lines the ADP pocket. Substrate-binding positions include Arg-162 and Met-169–Arg-171. Residues Gly-185–Glu-187 and Lys-213–His-215 each bind ADP. Residues Glu-222, Arg-243, and His-249–Arg-252 each bind substrate.

This sequence belongs to the phosphofructokinase type A (PFKA) family. ATP-dependent PFK group I subfamily. Prokaryotic clade 'B1' sub-subfamily. In terms of assembly, homotetramer. Mg(2+) serves as cofactor.

The protein resides in the cytoplasm. It carries out the reaction beta-D-fructose 6-phosphate + ATP = beta-D-fructose 1,6-bisphosphate + ADP + H(+). The protein operates within carbohydrate degradation; glycolysis; D-glyceraldehyde 3-phosphate and glycerone phosphate from D-glucose: step 3/4. Allosterically activated by ADP and other diphosphonucleosides, and allosterically inhibited by phosphoenolpyruvate. Functionally, catalyzes the phosphorylation of D-fructose 6-phosphate to fructose 1,6-bisphosphate by ATP, the first committing step of glycolysis. In Clostridium tetani (strain Massachusetts / E88), this protein is ATP-dependent 6-phosphofructokinase.